Here is a 410-residue protein sequence, read N- to C-terminus: Sulfate adenylyltransferase (410 aa).

It belongs to the sulfate adenylyltransferase family.

The enzyme catalyses sulfate + ATP + H(+) = adenosine 5'-phosphosulfate + diphosphate. It functions in the pathway sulfur metabolism; hydrogen sulfide biosynthesis; sulfite from sulfate: step 1/3. The chain is Sulfate adenylyltransferase from Syntrophobacter fumaroxidans (strain DSM 10017 / MPOB).